The following is a 229-amino-acid chain: 3-isopropylmalate dehydratase small subunit (229 aa).

A disordered region spans residues 198 to 229 (LPVKREPEQPIESAREGEYPDWQGPLADRGII). A compositionally biased stretch (basic and acidic residues) spans 200 to 215 (VKREPEQPIESAREGE).

It belongs to the LeuD family. LeuD type 1 subfamily. In terms of assembly, heterodimer of LeuC and LeuD.

The enzyme catalyses (2R,3S)-3-isopropylmalate = (2S)-2-isopropylmalate. It participates in amino-acid biosynthesis; L-leucine biosynthesis; L-leucine from 3-methyl-2-oxobutanoate: step 2/4. Its function is as follows. Catalyzes the isomerization between 2-isopropylmalate and 3-isopropylmalate, via the formation of 2-isopropylmaleate. The protein is 3-isopropylmalate dehydratase small subunit of Bifidobacterium adolescentis (strain ATCC 15703 / DSM 20083 / NCTC 11814 / E194a).